The following is a 479-amino-acid chain: Cardiolipin synthase (479 aa).

2 consecutive transmembrane segments (helical) span residues 5–25 (SLLL…IIFL) and 34–54 (WAWV…YLIF). 2 consecutive PLD phosphodiesterase domains span residues 216 to 243 (INYR…GDEY) and 392 to 419 (QNGF…DVRS). Active-site residues include H221, K223, D228, H397, K399, and D404.

It belongs to the phospholipase D family. Cardiolipin synthase subfamily.

The protein localises to the cell membrane. The enzyme catalyses 2 a 1,2-diacyl-sn-glycero-3-phospho-(1'-sn-glycerol) = a cardiolipin + glycerol. Catalyzes the reversible phosphatidyl group transfer from one phosphatidylglycerol molecule to another to form cardiolipin (CL) (diphosphatidylglycerol) and glycerol. The protein is Cardiolipin synthase (cls) of Oceanobacillus iheyensis (strain DSM 14371 / CIP 107618 / JCM 11309 / KCTC 3954 / HTE831).